The sequence spans 608 residues: Serine/arginine repetitive matrix protein 4 (608 aa).

Disordered regions lie at residues 34-246 (ASIT…PLPR) and 261-608 (SAAD…STRR). Positions 78 to 100 (GREKACRELDPARAHSASQDRDP) are enriched in basic and acidic residues. Basic residues-rich tracts occupy residues 107-123 (RGKK…RRRS) and 131-187 (VKKK…HRCP). Residues 188-200 (SRSQSSELRSPSC) show a composition bias toward low complexity. Residues 201–213 (ESRHRGRSPEEGR) show a composition bias toward basic and acidic residues. A compositionally biased stretch (basic residues) spans 214–228 (KSRRTHSRRCSKNHC). Over residues 289–299 (TSSPPSTQTSS) the composition is skewed to low complexity. Polar residues predominate over residues 322–339 (CGNTSDSGNSFTTSSPQN). Composition is skewed to low complexity over residues 389-420 (RSSS…SRST) and 428-459 (SRSP…SRYS). Residues 460 to 477 (PSRERDLKYGEKEPQPRE) are compositionally biased toward basic and acidic residues. Residues 478–494 (RARRRRRSYSPMRKRRR) are compositionally biased toward basic residues. A compositionally biased stretch (basic and acidic residues) spans 495 to 504 (DSPSHLEARR). A compositionally biased stretch (low complexity) spans 518–555 (PSPSSSSSLSSASSWYSSSSSSSSSSSRSPSRSYSRSR). Over residues 556–573 (SPSRSHSSRSQTRSRTRT) the composition is skewed to basic residues. A compositionally biased stretch (low complexity) spans 574-608 (SRSSSSRSLSLGSRSRSRNRSLSYSSAESYASTRR).

It belongs to the nSR100 family. In terms of processing, phosphorylated. Specifically expressed in neuronal cells (at protein level). Expressed in adult nervous system and sensory organ tissues.

Its subcellular location is the nucleus. Its function is as follows. Splicing factor specifically required for neural cell differentiation. Acts in conjunction with nPTB/PTBP2 by binding directly to its regulated target transcripts and promotes neural-specific exon inclusion in many genes that function in neural cell differentiation. Required to promote the inclusion of neural-specific exon 10 in nPTB/PTBP2, leading to increased expression of neural-specific nPTB/PTBP2. Also promotes the inclusion of exon 16 in DAAM1 in neuron extracts. Promotes alternative splicing of REST transcripts to produce REST isoform 2 (REST4) with greatly reduced repressive activity, thereby activating expression of REST targets in neural cells. Plays an important role during embryonic development as well as in the proper functioning of the adult nervous system. Regulates alternative splicing events in genes with important neuronal functions. This Mus musculus (Mouse) protein is Serine/arginine repetitive matrix protein 4 (Srrm4).